A 473-amino-acid polypeptide reads, in one-letter code: uncharacterized protein (473 aa).

Residues Pro26–Gly254 form the SET domain.

This is an uncharacterized protein from Schizosaccharomyces pombe (strain 972 / ATCC 24843) (Fission yeast).